A 229-amino-acid chain; its full sequence is 2,3-bisphosphoglycerate-dependent phosphoglycerate mutase (229 aa).

Substrate-binding positions include 8–15, 21–22, Arg-60, 87–90, Lys-98, 114–115, and 183–184; these read RHGESAWN, TG, ERHY, RR, and GN. The active-site Tele-phosphohistidine intermediate is the His-9. Residue Glu-87 is the Proton donor/acceptor of the active site.

Belongs to the phosphoglycerate mutase family. BPG-dependent PGAM subfamily. As to quaternary structure, homodimer.

It catalyses the reaction (2R)-2-phosphoglycerate = (2R)-3-phosphoglycerate. The protein operates within carbohydrate degradation; glycolysis; pyruvate from D-glyceraldehyde 3-phosphate: step 3/5. Its function is as follows. Catalyzes the interconversion of 2-phosphoglycerate and 3-phosphoglycerate. This is 2,3-bisphosphoglycerate-dependent phosphoglycerate mutase from Polynucleobacter asymbioticus (strain DSM 18221 / CIP 109841 / QLW-P1DMWA-1) (Polynucleobacter necessarius subsp. asymbioticus).